A 304-amino-acid chain; its full sequence is tRNA U34 carboxymethyltransferase (304 aa).

Residues Lys-73, Trp-87, Lys-92, Gly-111, 133–135, 160–161, Tyr-180, and Arg-295 each bind carboxy-S-adenosyl-L-methionine; these read DPS and VE.

Belongs to the class I-like SAM-binding methyltransferase superfamily. CmoB family. In terms of assembly, homotetramer.

It catalyses the reaction carboxy-S-adenosyl-L-methionine + 5-hydroxyuridine(34) in tRNA = 5-carboxymethoxyuridine(34) in tRNA + S-adenosyl-L-homocysteine + H(+). In terms of biological role, catalyzes carboxymethyl transfer from carboxy-S-adenosyl-L-methionine (Cx-SAM) to 5-hydroxyuridine (ho5U) to form 5-carboxymethoxyuridine (cmo5U) at position 34 in tRNAs. The protein is tRNA U34 carboxymethyltransferase of Aliarcobacter butzleri (strain RM4018) (Arcobacter butzleri).